We begin with the raw amino-acid sequence, 106 residues long: Large ribosomal subunit protein uL24 (106 aa).

Basic and acidic residues predominate over residues 84-97; the sequence is EKIGRELGAKEKAR. Residues 84-106 are disordered; sequence EKIGRELGAKEKARLQKRKAAAK.

This sequence belongs to the universal ribosomal protein uL24 family. As to quaternary structure, part of the 50S ribosomal subunit.

In terms of biological role, one of two assembly initiator proteins, it binds directly to the 5'-end of the 23S rRNA, where it nucleates assembly of the 50S subunit. One of the proteins that surrounds the polypeptide exit tunnel on the outside of the subunit. This Anaeromyxobacter dehalogenans (strain 2CP-C) protein is Large ribosomal subunit protein uL24.